A 178-amino-acid chain; its full sequence is UPF0232 protein cgR_0005 (178 aa).

The interval 16–55 (AMRRNGSVPDLNKNDAFRRPPAPKGGVEKRKKGRASGLDG) is disordered.

Belongs to the UPF0232 family.

The chain is UPF0232 protein cgR_0005 from Corynebacterium glutamicum (strain R).